The sequence spans 690 residues: Protein arginine N-methyltransferase 7 (690 aa).

SAM-dependent MTase PRMT-type domains are found at residues Q14–W357 and T366–L690.

It belongs to the class I-like SAM-binding methyltransferase superfamily. Protein arginine N-methyltransferase family. PRMT7 subfamily.

Its function is as follows. Essential arginine methyltransferase that can both catalyze the formation of omega-N monomethylarginine (MMA) and symmetrical dimethylarginine (sDMA). Specifically mediates the symmetrical dimethylation of arginine residues in the small nuclear ribonucleoproteins SmD1 and SmD3. This chain is Protein arginine N-methyltransferase 7 (Art7), found in Drosophila sechellia (Fruit fly).